The chain runs to 259 residues: Global transcriptional regulator CodY (259 aa).

A GAF domain region spans residues 1–155 (MELLAKTRKL…SSTVVGMEIL (155 aa)). A DNA-binding region (H-T-H motif) is located at residues 203–222 (ASKIADRVGITRSVIVNALR). S215 carries the phosphoserine modification.

It belongs to the CodY family.

Its subcellular location is the cytoplasm. Functionally, DNA-binding global transcriptional regulator which is involved in the adaptive response to starvation and acts by directly or indirectly controlling the expression of numerous genes in response to nutrient availability. During rapid exponential growth, CodY is highly active and represses genes whose products allow adaptation to nutrient depletion. In Bacillus cereus (strain B4264), this protein is Global transcriptional regulator CodY.